The sequence spans 376 residues: Heme chaperone HemW (376 aa).

The 236-residue stretch at M1–E236 folds into the Radical SAM core domain. Y10 serves as a coordination point for S-adenosyl-L-methionine. [4Fe-4S] cluster-binding residues include C16, C20, and C23. S-adenosyl-L-methionine-binding positions include G66, G67 to T68, E99, Q126, R138, and D162.

The protein belongs to the anaerobic coproporphyrinogen-III oxidase family. HemW subfamily. It depends on [4Fe-4S] cluster as a cofactor.

It localises to the cytoplasm. Its function is as follows. Probably acts as a heme chaperone, transferring heme to an unknown acceptor. Binds one molecule of heme per monomer, possibly covalently. Binds 1 [4Fe-4S] cluster. The cluster is coordinated with 3 cysteines and an exchangeable S-adenosyl-L-methionine. The sequence is that of Heme chaperone HemW from Buchnera aphidicola subsp. Schizaphis graminum (strain Sg).